The primary structure comprises 537 residues: MQETGVRNGAYGADKFGLKNLKGVKWNLTAPHLYEDALRAGEGVLSGDGSLCVDTGIFTGRSPKDKYTVRDANTENTMWWGGNQSITAEQFENLYQDFLKHAEGMSLFAQDLYGGADPSFQIKTRVFTEMAWHSLFIRTLLRRPETAELASFVPELTIIDLASFRADPARHGCKSENVVAIDFTRKIVLIGGTQYAGEMKKSVFTTLNYYLPDKGVLPMHCSANVGPDGDTAIFFGLSGTGKTTLSADPNRTLIGDDEHGWGKDGVFNFEGGCYAKCIKLSAEAEPEIFAASNRFGAILENCVLDPITRKPDFNDGSKTENTRSAYPLESIPNASPTGRAGQPKNVVMLAADAFGVMPPIAKLSPAQAMYHFLSGYTAKVAGTERGVTEPTPVFSTCFGSPFLPRDPSVYGNMLRELIAKHGVDCWLVNTGWTGGMYGTGHRMPIKVTRALLTAALDGSLRNVEFKTDPYFGFAVPTALPGVPSEILDPVKTWADKAAFDTTARKLVAMFQKNFTQFEAQVDAEVRAAQPEAKLAAE.

Residues arginine 61, tyrosine 195, and lysine 201 each contribute to the substrate site. ATP contacts are provided by residues lysine 201, histidine 220, and 236–244 (GLSGTGKTT). Residues lysine 201 and histidine 220 each coordinate Mn(2+). Aspartate 257 is a binding site for Mn(2+). Glutamate 285 contacts ATP. A compositionally biased stretch (basic and acidic residues) spans 312-321 (DFNDGSKTEN). The interval 312–339 (DFNDGSKTENTRSAYPLESIPNASPTGR) is disordered. Arginine 323 contacts substrate. Positions 323 and 448 each coordinate ATP.

Belongs to the phosphoenolpyruvate carboxykinase (ATP) family. Requires Mn(2+) as cofactor.

It localises to the cytoplasm. It catalyses the reaction oxaloacetate + ATP = phosphoenolpyruvate + ADP + CO2. It participates in carbohydrate biosynthesis; gluconeogenesis. Functionally, involved in the gluconeogenesis. Catalyzes the conversion of oxaloacetate (OAA) to phosphoenolpyruvate (PEP) through direct phosphoryl transfer between the nucleoside triphosphate and OAA. This chain is Phosphoenolpyruvate carboxykinase (ATP), found in Rhodopseudomonas palustris (strain BisB18).